The primary structure comprises 39 residues: Adipokinetic prohormone type 2 (39 aa).

At glutamine 1 the chain carries Pyrrolidone carboxylic acid. Tryptophan 8 carries the post-translational modification Tryptophan amide.

The protein belongs to the AKH/HRTH/RPCH family. Adipokinetic hormone precursor-related peptide (APRP) can form three type of disulfide-bond dimers: p1 (alpha-alpha), p2 (alpha-beta), and p3 (beta-beta).

It is found in the secreted. Functionally, this hormone, released from cells in the corpora cardiaca, causes release of diglycerides from the fat body and stimulation of muscles to use these diglycerides as an energy source during energy-demanding processes. This chain is Adipokinetic prohormone type 2, found in Schistocerca gregaria (Desert locust).